A 354-amino-acid polypeptide reads, in one-letter code: Photosystem II protein D1 2 (354 aa).

Helical transmembrane passes span 29 to 46, 118 to 133, and 142 to 156; these read YIGWFGVLMIPTLLTATT, HFLIGVFCYMGREWEL, and WIAVAYSAPVAAATA. Histidine 118 is a chlorophyll a binding site. Tyrosine 126 is a pheophytin a binding site. Positions 170 and 189 each coordinate [CaMn4O5] cluster. A helical transmembrane segment spans residues 197–218; that stretch reads FHQLGVAGVFGGALFSAMHGSL. Histidine 198 contributes to the chlorophyll a binding site. Residues histidine 215 and 264-265 each bind a quinone; that span reads SF. Histidine 215 contributes to the Fe cation binding site. A Fe cation-binding site is contributed by histidine 272. A helical membrane pass occupies residues 274–288; it reads FLAAWPVIGIWFTAL. Residues histidine 332, glutamate 333, aspartate 342, and alanine 344 each coordinate [CaMn4O5] cluster. A propeptide spanning residues 345 to 354 is cleaved from the precursor; sequence AVEVAPAVRG.

The protein belongs to the reaction center PufL/M/PsbA/D family. As to quaternary structure, PSII is composed of 1 copy each of membrane proteins PsbA, PsbB, PsbC, PsbD, PsbE, PsbF, PsbH, PsbI, PsbJ, PsbK, PsbL, PsbM, PsbT, PsbX, PsbY, PsbZ, Psb30/Ycf12, peripheral proteins PsbO, CyanoQ (PsbQ), PsbU, PsbV and a large number of cofactors. It forms dimeric complexes. The cofactor is The D1/D2 heterodimer binds P680, chlorophylls that are the primary electron donor of PSII, and subsequent electron acceptors. It shares a non-heme iron and each subunit binds pheophytin, quinone, additional chlorophylls, carotenoids and lipids. D1 provides most of the ligands for the Mn4-Ca-O5 cluster of the oxygen-evolving complex (OEC). There is also a Cl(-1) ion associated with D1 and D2, which is required for oxygen evolution. The PSII complex binds additional chlorophylls, carotenoids and specific lipids.. Tyr-161 forms a radical intermediate that is referred to as redox-active TyrZ, YZ or Y-Z. In terms of processing, C-terminally processed by CtpA; processing is essential to allow assembly of the oxygen-evolving complex and thus photosynthetic growth.

Its subcellular location is the cellular thylakoid membrane. The catalysed reaction is 2 a plastoquinone + 4 hnu + 2 H2O = 2 a plastoquinol + O2. Its function is as follows. Photosystem II (PSII) is a light-driven water:plastoquinone oxidoreductase that uses light energy to abstract electrons from H(2)O, generating O(2) and a proton gradient subsequently used for ATP formation. It consists of a core antenna complex that captures photons, and an electron transfer chain that converts photonic excitation into a charge separation. The D1/D2 (PsbA/PsbD) reaction center heterodimer binds P680, the primary electron donor of PSII as well as several subsequent electron acceptors. This is Photosystem II protein D1 2 from Synechococcus sp. (strain JA-2-3B'a(2-13)) (Cyanobacteria bacterium Yellowstone B-Prime).